The sequence spans 338 residues: Fructose-1,6-bisphosphatase class 1 (338 aa).

Mg(2+)-binding residues include glutamate 90, aspartate 112, leucine 114, and aspartate 115. Residues 115 to 118 (DGSS), asparagine 207, and lysine 273 contribute to the substrate site. Glutamate 279 contacts Mg(2+).

This sequence belongs to the FBPase class 1 family. As to quaternary structure, homotetramer. Mg(2+) serves as cofactor.

It is found in the cytoplasm. It catalyses the reaction beta-D-fructose 1,6-bisphosphate + H2O = beta-D-fructose 6-phosphate + phosphate. Its pathway is carbohydrate biosynthesis; gluconeogenesis. In Xanthomonas campestris pv. campestris (strain 8004), this protein is Fructose-1,6-bisphosphatase class 1.